The sequence spans 137 residues: Proline-rich protein 13 (137 aa).

Disordered regions lie at residues 26–54 (PPPL…PCRP) and 94–137 (VGPG…SDSD). Residues 103–124 (KTRKKMKKAHKKSHKHHKHGKH) are compositionally biased toward basic residues. Residues 125–137 (SSSSSSSSSSDSD) show a composition bias toward low complexity.

Its subcellular location is the nucleus. Its function is as follows. Negatively regulates TSP1 expression at the level of transcription. This down-regulation was shown to reduce taxane-induced apoptosis. The protein is Proline-rich protein 13 (Prr13) of Mus musculus (Mouse).